Here is a 117-residue protein sequence, read N- to C-terminus: ORF2 protein (117 aa).

The tract at residues 43–104 (NLGRPPAPQP…AGDGGDGELA (62 aa)) is disordered. The segment covering 79–98 (GTGGDAAGGEAGGSRGAGDG) has biased composition (gly residues).

The polypeptide is ORF2 protein (Homo sapiens (Human)).